The chain runs to 578 residues: ER degradation-enhancing alpha-mannosidase-like protein 2 (578 aa).

The first 21 residues, Met-1 to Gly-21, serve as a signal peptide directing secretion. Asn-90, Asn-112, Asn-289, and Asn-450 each carry an N-linked (GlcNAc...) asparagine glycan. Residues Lys-517–Ser-557 are disordered. Positions Glu-538 to Pro-548 are enriched in basic and acidic residues.

This sequence belongs to the glycosyl hydrolase 47 family. In terms of processing, N-glycosylated. In terms of tissue distribution, expressed ubiquitously in all tissues tested with slightly higher levels detected in small intestine and peripheral blood leukocytes and weakest levels in brain and skeletal muscle.

The protein localises to the endoplasmic reticulum lumen. Functionally, involved in the endoplasmic reticulum-associated degradation (ERAD) pathway that targets misfolded glycoproteins for degradation in an N-glycan-dependent manner. May initiate ERAD by promoting the first mannose trimming step of ERAD substrates, from Man9GlcNAc2 to Man8GlcNAc2. Seems to recognize and bind to exposed hydrophobic regions in target proteins. This Homo sapiens (Human) protein is ER degradation-enhancing alpha-mannosidase-like protein 2 (EDEM2).